Here is a 227-residue protein sequence, read N- to C-terminus: DNA repair protein RecO (227 aa).

Belongs to the RecO family.

Involved in DNA repair and RecF pathway recombination. The sequence is that of DNA repair protein RecO from Pseudomonas putida (strain W619).